The chain runs to 137 residues: Small ribosomal subunit protein bS6 (137 aa).

The protein belongs to the bacterial ribosomal protein bS6 family.

Binds together with bS18 to 16S ribosomal RNA. This is Small ribosomal subunit protein bS6 from Sulfurimonas denitrificans (strain ATCC 33889 / DSM 1251) (Thiomicrospira denitrificans (strain ATCC 33889 / DSM 1251)).